A 337-amino-acid polypeptide reads, in one-letter code: Lipoate-protein ligase A (337 aa).

One can recognise a BPL/LPL catalytic domain in the interval 29–216; that stretch reads DQNQTILFLW…AFFNYYQTTV (188 aa). Residues Arg-71, 76–79, and Lys-134 each bind ATP; that span reads GAVF. Lys-134 provides a ligand contact to (R)-lipoate.

It belongs to the LplA family. In terms of assembly, monomer.

The protein resides in the cytoplasm. The catalysed reaction is L-lysyl-[lipoyl-carrier protein] + (R)-lipoate + ATP = N(6)-[(R)-lipoyl]-L-lysyl-[lipoyl-carrier protein] + AMP + diphosphate + H(+). Its pathway is protein modification; protein lipoylation via exogenous pathway; protein N(6)-(lipoyl)lysine from lipoate: step 1/2. It functions in the pathway protein modification; protein lipoylation via exogenous pathway; protein N(6)-(lipoyl)lysine from lipoate: step 2/2. Catalyzes both the ATP-dependent activation of exogenously supplied lipoate to lipoyl-AMP and the transfer of the activated lipoyl onto the lipoyl domains of lipoate-dependent enzymes. The sequence is that of Lipoate-protein ligase A from Blochmanniella floridana.